The sequence spans 2126 residues: Polycystin family receptor for egg jelly (2126 aa).

A signal peptide spans 1-18 (MWPGPALLLLGLGLGLGS). Over 19-1068 (QPPPTGPRGL…AIISNLTQNP (1050 aa)) the chain is Extracellular. The disordered stretch occupies residues 20-71 (PPPTGPRGLPGVLRGAPGLGQGAESSVRGGDTGGLSPRAAPRHASPTPPRRC). 14 N-linked (GlcNAc...) asparagine glycosylation sites follow: N84, N94, N129, N192, N243, N325, N571, N761, N774, N807, N849, N888, N960, and N1063. Residues 102-797 (CIMQPVKINR…SMMFCEFADD (696 aa)) enclose the REJ domain. The helical transmembrane segment at 1069–1089 (ATFLAVLFIMILYAILAFWAL) threads the bilayer. The Cytoplasmic portion of the chain corresponds to 1090 to 1273 (HRDVIDLYFR…VPKPFNRLQR (184 aa)). A PLAT domain is found at 1114–1231 (LCYLVTIFTG…TLDATFSVTN (118 aa)). Residues 1274–1294 (LSCCLAMLLSSLVCNIMFFNL) traverse the membrane as a helical segment. Topologically, residues 1295 to 1311 (NQKEKIESRHMHIIRSM) are extracellular. The chain crosses the membrane as a helical span at residues 1312 to 1332 (LIGIESVVITIPVQLLITFFF). Topologically, residues 1333 to 1449 (TYSQKNLKMN…KTQIILPRWC (117 aa)) are cytoplasmic. The disordered stretch occupies residues 1379-1431 (RAAVSTSAPEEKEAFETSQKHEKADTQMSNKNSSNNNQEASEGVPPKAFSSQP). Basic and acidic residues predominate over residues 1387-1403 (PEEKEAFETSQKHEKAD). Residues 1450–1470 (VYIAWFLVFATSGISSFFIVF) traverse the membrane as a helical segment. Over 1471 to 1483 (YGVTYGYAKSIEW) the chain is Extracellular. A helical membrane pass occupies residues 1484–1504 (LFASFCSFCQSVFLVQPCNIL). At 1505 to 1580 (LRSGTRSYKP…RRENRIRRRS (76 aa)) the chain is on the cytoplasmic side. A helical membrane pass occupies residues 1581 to 1601 (FLFLSYLVTHFIFLTLLLLLI). Topologically, residues 1602-1838 (FSLRHNDSFY…DFNRKTSSEI (237 aa)) are extracellular. Residues N1607, N1676, N1766, and N1817 are each glycosylated (N-linked (GlcNAc...) asparagine). A helical membrane pass occupies residues 1839–1859 (YLYAAILIFFCAYVVDEGYII). At 1860–1875 (RQERASYIRSVYNLLN) the chain is on the cytoplasmic side. A helical membrane pass occupies residues 1876–1896 (FSLKCMFALLIVLFFWKYFLA). The Extracellular portion of the chain corresponds to 1897–1918 (TKMVQLYLADPEAFIPFHAVSR). The helical transmembrane segment at 1919 to 1939 (VDHFMRIILAFLLFLTILKTL) threads the bilayer. Residues 1940-1964 (RYSRFFYNVRLAQKAIQAALPGICH) are Cytoplasmic-facing. A helical transmembrane segment spans residues 1965 to 1985 (TALVVSIYSFMYVAFGYLVFG). The Extracellular portion of the chain corresponds to 1986 to 2019 (QHEWNYSNMIHATQTIFSYCVSAFQNTEFSGNKV). The helical transmembrane segment at 2020–2040 (LGVLFLSSFMLVMICIFINLF) threads the bilayer. Topologically, residues 2041 to 2126 (QAVILSAYDE…NGKKMIYLVV (86 aa)) are cytoplasmic.

The protein belongs to the polycystin family. As to expression, exclusively expressed in testis.

It localises to the cell membrane. It is found in the cytoplasmic vesicle. Its subcellular location is the secretory vesicle. The protein localises to the acrosome membrane. The protein resides in the nucleus. Functionally, testis-specific protein that controls sperm transport and the timing of zona pellucida-evoked exocytosis of the sperm acrosome. The sequence is that of Polycystin family receptor for egg jelly (Pkdrej) from Mus musculus (Mouse).